The following is a 190-amino-acid chain: Elongation factor P-like protein (190 aa).

It belongs to the elongation factor P family.

This is Elongation factor P-like protein from Shigella dysenteriae serotype 1 (strain Sd197).